Consider the following 509-residue polypeptide: Probable DNA ligase (509 aa).

Aspartate 218 is a binding site for ATP. Lysine 220 acts as the N6-AMP-lysine intermediate in catalysis. Residues arginine 225, arginine 240, glutamate 269, phenylalanine 302, arginine 374, and lysine 380 each coordinate ATP.

This sequence belongs to the ATP-dependent DNA ligase family. The cofactor is Mg(2+).

It carries out the reaction ATP + (deoxyribonucleotide)n-3'-hydroxyl + 5'-phospho-(deoxyribonucleotide)m = (deoxyribonucleotide)n+m + AMP + diphosphate.. Functionally, DNA ligase that seals nicks in double-stranded DNA during DNA replication, DNA recombination and DNA repair. In Nocardioides sp. (strain ATCC BAA-499 / JS614), this protein is Probable DNA ligase.